Here is a 75-residue protein sequence, read N- to C-terminus: Exodeoxyribonuclease 7 small subunit (75 aa).

Belongs to the XseB family. As to quaternary structure, heterooligomer composed of large and small subunits.

The protein resides in the cytoplasm. It catalyses the reaction Exonucleolytic cleavage in either 5'- to 3'- or 3'- to 5'-direction to yield nucleoside 5'-phosphates.. In terms of biological role, bidirectionally degrades single-stranded DNA into large acid-insoluble oligonucleotides, which are then degraded further into small acid-soluble oligonucleotides. The polypeptide is Exodeoxyribonuclease 7 small subunit (Chlamydia pneumoniae (Chlamydophila pneumoniae)).